Consider the following 273-residue polypeptide: 4-hydroxy-tetrahydrodipicolinate reductase (273 aa).

Residues 12-17 (GAGGRM) and glutamate 38 each bind NAD(+). Residue arginine 39 participates in NADP(+) binding. NAD(+)-binding positions include 102-104 (GTT) and 126-129 (AANF). The active-site Proton donor/acceptor is the histidine 159. Histidine 160 contacts (S)-2,3,4,5-tetrahydrodipicolinate. Lysine 163 functions as the Proton donor in the catalytic mechanism. A (S)-2,3,4,5-tetrahydrodipicolinate-binding site is contributed by 169-170 (GT).

The protein belongs to the DapB family. Homotetramer.

It localises to the cytoplasm. The catalysed reaction is (S)-2,3,4,5-tetrahydrodipicolinate + NAD(+) + H2O = (2S,4S)-4-hydroxy-2,3,4,5-tetrahydrodipicolinate + NADH + H(+). It catalyses the reaction (S)-2,3,4,5-tetrahydrodipicolinate + NADP(+) + H2O = (2S,4S)-4-hydroxy-2,3,4,5-tetrahydrodipicolinate + NADPH + H(+). Its pathway is amino-acid biosynthesis; L-lysine biosynthesis via DAP pathway; (S)-tetrahydrodipicolinate from L-aspartate: step 4/4. In terms of biological role, catalyzes the conversion of 4-hydroxy-tetrahydrodipicolinate (HTPA) to tetrahydrodipicolinate. The protein is 4-hydroxy-tetrahydrodipicolinate reductase of Pectobacterium atrosepticum (strain SCRI 1043 / ATCC BAA-672) (Erwinia carotovora subsp. atroseptica).